Reading from the N-terminus, the 288-residue chain is Small ribosomal subunit protein uS15m (288 aa).

Residues 1 to 50 constitute a mitochondrion transit peptide; that stretch reads MRLFEGAFQPWKLASTNLMQQCLLLNKKSQFHTTCILQGLKKQKANQRRK.

This sequence belongs to the universal ribosomal protein uS15 family. Component of the mitochondrial small ribosomal subunit (mt-SSU). Mature yeast 74S mitochondrial ribosomes consist of a small (37S) and a large (54S) subunit. The 37S small subunit contains a 15S ribosomal RNA (15S mt-rRNA) and at least 32 different proteins. The 54S large subunit contains a 21S rRNA (21S mt-rRNA) and at least 45 different proteins.

The protein localises to the mitochondrion. In terms of biological role, component of the mitochondrial ribosome (mitoribosome), a dedicated translation machinery responsible for the synthesis of mitochondrial genome-encoded proteins, including at least some of the essential transmembrane subunits of the mitochondrial respiratory chain. The mitoribosomes are attached to the mitochondrial inner membrane and translation products are cotranslationally integrated into the membrane. This Schizosaccharomyces pombe (strain 972 / ATCC 24843) (Fission yeast) protein is Small ribosomal subunit protein uS15m (mrps28).